Consider the following 374-residue polypeptide: UPF0496 protein At3g28270 (374 aa).

Residues 171-210 (KVLTTQFERIKKQQESLLEEVSETRKKIQDEISNLEKKTL) are a coiled coil. 2 helical membrane-spanning segments follow: residues 214-234 (VVFG…IATG) and 235-255 (VGAA…GWAG). A coiled-coil region spans residues 256 to 321 (VYTTLDKKKD…MLKLVDNAID (66 aa)).

The protein belongs to the UPF0496 family.

It is found in the membrane. The protein is UPF0496 protein At3g28270 of Arabidopsis thaliana (Mouse-ear cress).